The sequence spans 696 residues: Elongation factor G (696 aa).

Residues 8-282 form the tr-type G domain; sequence KDYRNIGIMA…AVVDYLPSPL (275 aa). Residues 17 to 24, 81 to 85, and 135 to 138 contribute to the GTP site; these read AHIDAGKT, DTPGH, and NKMD.

Belongs to the TRAFAC class translation factor GTPase superfamily. Classic translation factor GTPase family. EF-G/EF-2 subfamily.

It is found in the cytoplasm. Its function is as follows. Catalyzes the GTP-dependent ribosomal translocation step during translation elongation. During this step, the ribosome changes from the pre-translocational (PRE) to the post-translocational (POST) state as the newly formed A-site-bound peptidyl-tRNA and P-site-bound deacylated tRNA move to the P and E sites, respectively. Catalyzes the coordinated movement of the two tRNA molecules, the mRNA and conformational changes in the ribosome. This Mycoplasmopsis synoviae (strain 53) (Mycoplasma synoviae) protein is Elongation factor G.